A 347-amino-acid chain; its full sequence is GMP reductase (347 aa).

108–131 serves as a coordination point for NADP(+); that stretch reads DDFTKTRQILAMSSALRFICVDVA. G181 and G183 together coordinate K(+). The active-site Thioimidate intermediate is C186. 216–239 lines the NADP(+) pocket; it reads IVGDGGCTCPGDVAKAFGGGADFV.

It belongs to the IMPDH/GMPR family. GuaC type 1 subfamily. As to quaternary structure, homotetramer.

It carries out the reaction IMP + NH4(+) + NADP(+) = GMP + NADPH + 2 H(+). Catalyzes the irreversible NADPH-dependent deamination of GMP to IMP. It functions in the conversion of nucleobase, nucleoside and nucleotide derivatives of G to A nucleotides, and in maintaining the intracellular balance of A and G nucleotides. The protein is GMP reductase of Aeromonas hydrophila subsp. hydrophila (strain ATCC 7966 / DSM 30187 / BCRC 13018 / CCUG 14551 / JCM 1027 / KCTC 2358 / NCIMB 9240 / NCTC 8049).